The following is a 157-amino-acid chain: Cysteine protease Nivulian-2 (157 aa).

The protein belongs to the intron maturase 2 family. MatK subfamily. In terms of assembly, monomer. Glycosylated. In terms of tissue distribution, accumulates in latex (at protein level).

Its activity is regulated as follows. Inhibited by HgCl(2), iodoacetamide (IAA) and, to a far lesser extent, by SDS, hydrogen peroxide H(1)O(2), KCl, NaCl, ZnCl(2), AgSO(4), CdCl(2), FeCl(3), PMSF, Pepstatin A and EDTA. Repressed moderately by many organic solvents such as diethyl ether, ethy lacetate, acetophenone, butanol, trichloroethylene, tetrahydrofuran, methanol, chloroform and dichloromethane, and, to a lesser extent, by propanol, benzyl alcohol and chlorobenzene. Cysteine protease inducing milk clotting by cleaving casein. Exhibits biomedical activities such as wound healing, haemostatic and antibacterial activity, as well as agricultural application in biocontrol process against the infectious management of the root knot nematode Meloidogyne incognita. This chain is Cysteine protease Nivulian-2, found in Euphorbia nivulia (Leafy milk hedge).